The primary structure comprises 122 residues: Large ribosomal subunit protein uL14 (122 aa).

The protein belongs to the universal ribosomal protein uL14 family. Part of the 50S ribosomal subunit. Forms a cluster with proteins L3 and L19. In the 70S ribosome, L14 and L19 interact and together make contacts with the 16S rRNA in bridges B5 and B8.

In terms of biological role, binds to 23S rRNA. Forms part of two intersubunit bridges in the 70S ribosome. This Protochlamydia amoebophila (strain UWE25) protein is Large ribosomal subunit protein uL14.